A 642-amino-acid chain; its full sequence is Threonine--tRNA ligase (642 aa).

The 61-residue stretch at 1–61 (MPVITLPDGS…ETDSDLSIIT (61 aa)) folds into the TGS domain. A catalytic region spans residues 243 to 534 (DHRKIGKQLD…LIEEYAGKFP (292 aa)). Residues Cys334, His385, and His511 each coordinate Zn(2+).

Belongs to the class-II aminoacyl-tRNA synthetase family. In terms of assembly, homodimer. It depends on Zn(2+) as a cofactor.

The protein resides in the cytoplasm. It carries out the reaction tRNA(Thr) + L-threonine + ATP = L-threonyl-tRNA(Thr) + AMP + diphosphate + H(+). Catalyzes the attachment of threonine to tRNA(Thr) in a two-step reaction: L-threonine is first activated by ATP to form Thr-AMP and then transferred to the acceptor end of tRNA(Thr). Also edits incorrectly charged L-seryl-tRNA(Thr). In Shewanella pealeana (strain ATCC 700345 / ANG-SQ1), this protein is Threonine--tRNA ligase.